The following is a 214-amino-acid chain: Adenylate kinase (214 aa).

Residue 10–15 (GGGKGT) participates in ATP binding. The tract at residues 30 to 59 (STGDMFRENVKGGTELGLKAKEYMDAGQLV) is NMP. AMP contacts are provided by residues threonine 31, arginine 36, 57–59 (QLV), 85–88 (GFPR), and glutamine 92. Residues 126–163 (GRRVCRVCGATFHVLFNAPKEDGKCDKCGGELYQRSDD) form an LID region. Position 127 (arginine 127) interacts with ATP. The Zn(2+) site is built by cysteine 130 and cysteine 133. 136 to 137 (TF) contacts ATP. The Zn(2+) site is built by cysteine 150 and cysteine 153. AMP is bound by residues arginine 160 and arginine 171. Glutamine 199 is an ATP binding site.

This sequence belongs to the adenylate kinase family. In terms of assembly, monomer.

Its subcellular location is the cytoplasm. It carries out the reaction AMP + ATP = 2 ADP. It functions in the pathway purine metabolism; AMP biosynthesis via salvage pathway; AMP from ADP: step 1/1. Its function is as follows. Catalyzes the reversible transfer of the terminal phosphate group between ATP and AMP. Plays an important role in cellular energy homeostasis and in adenine nucleotide metabolism. This Desulforudis audaxviator (strain MP104C) protein is Adenylate kinase.